Here is a 673-residue protein sequence, read N- to C-terminus: DNA ligase (673 aa).

NAD(+) is bound by residues 33-37 (DHQYD), 83-84 (SL), and Glu117. Lys119 (N6-AMP-lysine intermediate) is an active-site residue. Positions 140, 175, 282, and 306 each coordinate NAD(+). 4 residues coordinate Zn(2+): Cys400, Cys403, Cys418, and Cys424. The region spanning 592–673 (RGSSAISGKT…WVKMVEDARS (82 aa)) is the BRCT domain.

It belongs to the NAD-dependent DNA ligase family. LigA subfamily. Mg(2+) is required as a cofactor. Requires Mn(2+) as cofactor.

It carries out the reaction NAD(+) + (deoxyribonucleotide)n-3'-hydroxyl + 5'-phospho-(deoxyribonucleotide)m = (deoxyribonucleotide)n+m + AMP + beta-nicotinamide D-nucleotide.. Its function is as follows. DNA ligase that catalyzes the formation of phosphodiester linkages between 5'-phosphoryl and 3'-hydroxyl groups in double-stranded DNA using NAD as a coenzyme and as the energy source for the reaction. It is essential for DNA replication and repair of damaged DNA. This is DNA ligase from Anaplasma marginale (strain St. Maries).